Here is a 274-residue protein sequence, read N- to C-terminus: tRNA dimethylallyltransferase (274 aa).

Positions 9–12 (DSLS) are interaction with substrate tRNA.

This sequence belongs to the IPP transferase family. In terms of assembly, monomer. Requires Mg(2+) as cofactor.

It catalyses the reaction adenosine(37) in tRNA + dimethylallyl diphosphate = N(6)-dimethylallyladenosine(37) in tRNA + diphosphate. Its function is as follows. Catalyzes the transfer of a dimethylallyl group onto the adenine at position 37 in tRNAs that read codons beginning with uridine, leading to the formation of N6-(dimethylallyl)adenosine (i(6)A). The protein is tRNA dimethylallyltransferase (miaA) of Helicobacter pylori (strain P12).